Consider the following 480-residue polypeptide: Serine/threonine-protein kinase WAG2 (480 aa).

In terms of domain architecture, Protein kinase spans 88–396; it reads LKLIRHLGTG…AQDIKRHPFF (309 aa). Residues 94-102 and lysine 117 each bind ATP; that span reads LGTGNLGRV. The Proton acceptor role is filled by aspartate 213.

It belongs to the protein kinase superfamily. Ser/Thr protein kinase family. In terms of tissue distribution, expressed in root tips, lateral root primordia and emerging true leaf primordia.

The protein resides in the cytoplasm. It localises to the cytosol. It catalyses the reaction L-seryl-[protein] + ATP = O-phospho-L-seryl-[protein] + ADP + H(+). The enzyme catalyses L-threonyl-[protein] + ATP = O-phospho-L-threonyl-[protein] + ADP + H(+). In terms of biological role, serine/threonine-protein kinase involved in the regulation of auxin signaling. Acts as a positive regulator of cellular auxin efflux and regulates organ development by enhancing PIN-mediated polar auxin transport. Phosphorylates conserved serine residues in the PIN auxin efflux carriers. Phosphorylation of PIN proteins is required and sufficient for apical-basal PIN polarity that enables directional intercellular auxin fluxes, which mediate differential growth, tissue patterning and organogenesis. Acts as a suppressor of root waving. The sequence is that of Serine/threonine-protein kinase WAG2 (WAG2) from Arabidopsis thaliana (Mouse-ear cress).